Reading from the N-terminus, the 119-residue chain is Putative membrane protein insertion efficiency factor (119 aa).

The protein belongs to the UPF0161 family.

Its subcellular location is the cell inner membrane. Could be involved in insertion of integral membrane proteins into the membrane. The polypeptide is Putative membrane protein insertion efficiency factor (Brucella anthropi (strain ATCC 49188 / DSM 6882 / CCUG 24695 / JCM 21032 / LMG 3331 / NBRC 15819 / NCTC 12168 / Alc 37) (Ochrobactrum anthropi)).